Consider the following 174-residue polypeptide: RNA pyrophosphohydrolase (174 aa).

In terms of domain architecture, Nudix hydrolase spans 6-149; sequence GFRANVGIII…KRDVYRKVMK (144 aa). The Nudix box signature appears at 38–59; it reads GGVDDGESAEEAMYRELYEEVG.

The protein belongs to the Nudix hydrolase family. RppH subfamily. It depends on a divalent metal cation as a cofactor.

Functionally, accelerates the degradation of transcripts by removing pyrophosphate from the 5'-end of triphosphorylated RNA, leading to a more labile monophosphorylated state that can stimulate subsequent ribonuclease cleavage. In Shewanella sp. (strain W3-18-1), this protein is RNA pyrophosphohydrolase.